The following is a 20-amino-acid chain: KELLDADGDILLNGGXYYIV.

The protein belongs to the protease inhibitor I3 (leguminous Kunitz-type inhibitor) family. Heterodimer of an 'A' and a 'B' chain linked by a disulfide bond.

Inhibits trypsin and alpha-chymotrypsin. In Albizia julibrissin (Silk tree), this protein is Trypsin inhibitor A chain.